Reading from the N-terminus, the 188-residue chain is MKVILASASQRRQELLIRLCDNFDIIVSDFDEEKVVFENSIDEYVQNIALGKAMDIKEKIKEDAIIISADTIVTLDDKILGKPKDEEDAFNMIKLLQGRSHKVYSGVVVINTKKDLIIKNSVATEVVFSKMNDDEIRKYIKTKEPLDKAGAYGIQGIGGIFVEEIRGCYYNVVGLPLNKLKTMLEEAI.

D70 acts as the Proton acceptor in catalysis.

It belongs to the Maf family. YhdE subfamily. It depends on a divalent metal cation as a cofactor.

The protein resides in the cytoplasm. It carries out the reaction dTTP + H2O = dTMP + diphosphate + H(+). The catalysed reaction is UTP + H2O = UMP + diphosphate + H(+). Nucleoside triphosphate pyrophosphatase that hydrolyzes dTTP and UTP. May have a dual role in cell division arrest and in preventing the incorporation of modified nucleotides into cellular nucleic acids. This Clostridium botulinum (strain Eklund 17B / Type B) protein is dTTP/UTP pyrophosphatase.